A 179-amino-acid polypeptide reads, in one-letter code: Peptide deformylase 2 (179 aa).

Residues Cys-101 and His-143 each coordinate Fe cation. Glu-144 is an active-site residue. His-147 provides a ligand contact to Fe cation.

This sequence belongs to the polypeptide deformylase family. Fe(2+) is required as a cofactor.

The enzyme catalyses N-terminal N-formyl-L-methionyl-[peptide] + H2O = N-terminal L-methionyl-[peptide] + formate. Removes the formyl group from the N-terminal Met of newly synthesized proteins. Requires at least a dipeptide for an efficient rate of reaction. N-terminal L-methionine is a prerequisite for activity but the enzyme has broad specificity at other positions. The sequence is that of Peptide deformylase 2 from Pseudomonas syringae pv. tomato (strain ATCC BAA-871 / DC3000).